The primary structure comprises 118 residues: Large ribosomal subunit protein bL20 (118 aa).

It belongs to the bacterial ribosomal protein bL20 family.

Its function is as follows. Binds directly to 23S ribosomal RNA and is necessary for the in vitro assembly process of the 50S ribosomal subunit. It is not involved in the protein synthesizing functions of that subunit. This is Large ribosomal subunit protein bL20 from Trichormus variabilis (strain ATCC 29413 / PCC 7937) (Anabaena variabilis).